A 358-amino-acid polypeptide reads, in one-letter code: Alanine racemase (358 aa).

The active-site Proton acceptor; specific for D-alanine is the lysine 34. Lysine 34 is modified (N6-(pyridoxal phosphate)lysine). Arginine 129 contributes to the substrate binding site. Tyrosine 254 acts as the Proton acceptor; specific for L-alanine in catalysis. Residue methionine 302 participates in substrate binding.

This sequence belongs to the alanine racemase family. It depends on pyridoxal 5'-phosphate as a cofactor.

The enzyme catalyses L-alanine = D-alanine. Its pathway is amino-acid biosynthesis; D-alanine biosynthesis; D-alanine from L-alanine: step 1/1. Catalyzes the interconversion of L-alanine and D-alanine. May also act on other amino acids. This is Alanine racemase (alr) from Vibrio vulnificus (strain CMCP6).